The following is a 203-amino-acid chain: dITP/XTP pyrophosphatase (203 aa).

Position 7–12 (7–12 (SGNLHK)) interacts with substrate. Positions 47 and 77 each coordinate Mg(2+). The active-site Proton acceptor is Asp77. Substrate-binding positions include Ser78, 160-163 (FGYD), Lys183, and 188-189 (HR).

The protein belongs to the HAM1 NTPase family. As to quaternary structure, homodimer. It depends on Mg(2+) as a cofactor.

It catalyses the reaction XTP + H2O = XMP + diphosphate + H(+). The catalysed reaction is dITP + H2O = dIMP + diphosphate + H(+). The enzyme catalyses ITP + H2O = IMP + diphosphate + H(+). In terms of biological role, pyrophosphatase that catalyzes the hydrolysis of nucleoside triphosphates to their monophosphate derivatives, with a high preference for the non-canonical purine nucleotides XTP (xanthosine triphosphate), dITP (deoxyinosine triphosphate) and ITP. Seems to function as a house-cleaning enzyme that removes non-canonical purine nucleotides from the nucleotide pool, thus preventing their incorporation into DNA/RNA and avoiding chromosomal lesions. This chain is dITP/XTP pyrophosphatase, found in Opitutus terrae (strain DSM 11246 / JCM 15787 / PB90-1).